The primary structure comprises 250 residues: UPF0736 protein RBAM_011410 (250 aa).

It belongs to the UPF0736 family.

The chain is UPF0736 protein RBAM_011410 from Bacillus velezensis (strain DSM 23117 / BGSC 10A6 / LMG 26770 / FZB42) (Bacillus amyloliquefaciens subsp. plantarum).